We begin with the raw amino-acid sequence, 612 residues long: UvrABC system protein C (612 aa).

Residues 20–98 (THSGVYRMLD…IKQHRPKYNI (79 aa)) enclose the GIY-YIG domain. Residues 208-243 (SSVLEEISAKMYQASEDMEYEKAQVYRDQLVVLRKL) form the UVR domain.

This sequence belongs to the UvrC family. In terms of assembly, interacts with UvrB in an incision complex.

The protein resides in the cytoplasm. In terms of biological role, the UvrABC repair system catalyzes the recognition and processing of DNA lesions. UvrC both incises the 5' and 3' sides of the lesion. The N-terminal half is responsible for the 3' incision and the C-terminal half is responsible for the 5' incision. This chain is UvrABC system protein C, found in Francisella tularensis subsp. tularensis (strain WY96-3418).